A 343-amino-acid polypeptide reads, in one-letter code: Fructose-1,6-bisphosphatase class 1 (343 aa).

Glu91, Asp113, Ile115, and Asp116 together coordinate Mg(2+). Residues 116-119, Asn210, and Lys276 contribute to the substrate site; that span reads DGSS. Residue Glu282 participates in Mg(2+) binding.

This sequence belongs to the FBPase class 1 family. In terms of assembly, homotetramer. It depends on Mg(2+) as a cofactor.

It is found in the cytoplasm. The catalysed reaction is beta-D-fructose 1,6-bisphosphate + H2O = beta-D-fructose 6-phosphate + phosphate. It functions in the pathway carbohydrate biosynthesis; gluconeogenesis. This is Fructose-1,6-bisphosphatase class 1 from Parvibaculum lavamentivorans (strain DS-1 / DSM 13023 / NCIMB 13966).